The chain runs to 104 residues: Large ribosomal subunit protein eL36 (104 aa).

It belongs to the eukaryotic ribosomal protein eL36 family.

The chain is Large ribosomal subunit protein eL36 (RPL36) from Tetrahymena thermophila (strain SB210).